The sequence spans 279 residues: Small ribosomal subunit protein uS2 (279 aa).

The interval 232–279 (RRRGTDEKPEAGVASDEPLAEWERELLEEPKKSDEPKSDEQPAAAAAE) is disordered. A compositionally biased stretch (basic and acidic residues) spans 252 to 271 (EWERELLEEPKKSDEPKSDE).

The protein belongs to the universal ribosomal protein uS2 family.

In Salinispora arenicola (strain CNS-205), this protein is Small ribosomal subunit protein uS2.